Reading from the N-terminus, the 73-residue chain is Disintegrin trigramin-beta-2 (73 aa).

A Disintegrin domain is found at 1-73 (EAGKDCDCGS…AGCPRNPFHA (73 aa)). Intrachain disulfides connect Cys6–Cys21, Cys8–Cys16, Cys15–Cys38, Cys29–Cys35, Cys34–Cys59, and Cys47–Cys66. The short motif at 51 to 53 (RGD) is the Cell attachment site element.

The protein belongs to the venom metalloproteinase (M12B) family. P-II subfamily. P-IIa sub-subfamily. In terms of assembly, monomer (disintegrin). Expressed by the venom gland.

It localises to the secreted. Inhibits fibrinogen interaction with platelets. Acts by binding to the alpha-IIb/beta-3 receptor (ITGA2B/ITGB3) on the platelet surface and inhibits aggregation induced by ADP, thrombin, platelet-activating factor and collagen. The sequence is that of Disintegrin trigramin-beta-2 from Craspedocephalus gramineus (Bamboo pit viper).